Reading from the N-terminus, the 204-residue chain is Holliday junction branch migration complex subunit RuvA (204 aa).

Residues 1-64 (MISRMKGIIL…EDAQLLYGFH (64 aa)) are domain I. The domain II stretch occupies residues 65–143 (HPKERAMFSE…NLNKNLFKST (79 aa)). The flexible linker stretch occupies residues 144-155 (ADHMLSSVSTDL). Residues 156 to 204 (SAKSAEAEAISALISLGYKPQEAAQLIKNIAQPDLDSQALIKHALRSTL) form a domain III region.

Belongs to the RuvA family. In terms of assembly, homotetramer. Forms an RuvA(8)-RuvB(12)-Holliday junction (HJ) complex. HJ DNA is sandwiched between 2 RuvA tetramers; dsDNA enters through RuvA and exits via RuvB. An RuvB hexamer assembles on each DNA strand where it exits the tetramer. Each RuvB hexamer is contacted by two RuvA subunits (via domain III) on 2 adjacent RuvB subunits; this complex drives branch migration. In the full resolvosome a probable DNA-RuvA(4)-RuvB(12)-RuvC(2) complex forms which resolves the HJ.

Its subcellular location is the cytoplasm. The RuvA-RuvB-RuvC complex processes Holliday junction (HJ) DNA during genetic recombination and DNA repair, while the RuvA-RuvB complex plays an important role in the rescue of blocked DNA replication forks via replication fork reversal (RFR). RuvA specifically binds to HJ cruciform DNA, conferring on it an open structure. The RuvB hexamer acts as an ATP-dependent pump, pulling dsDNA into and through the RuvAB complex. HJ branch migration allows RuvC to scan DNA until it finds its consensus sequence, where it cleaves and resolves the cruciform DNA. The chain is Holliday junction branch migration complex subunit RuvA from Hamiltonella defensa subsp. Acyrthosiphon pisum (strain 5AT).